A 95-amino-acid polypeptide reads, in one-letter code: Aspartyl/glutamyl-tRNA(Asn/Gln) amidotransferase subunit C (95 aa).

It belongs to the GatC family. In terms of assembly, heterotrimer of A, B and C subunits.

The enzyme catalyses L-glutamyl-tRNA(Gln) + L-glutamine + ATP + H2O = L-glutaminyl-tRNA(Gln) + L-glutamate + ADP + phosphate + H(+). The catalysed reaction is L-aspartyl-tRNA(Asn) + L-glutamine + ATP + H2O = L-asparaginyl-tRNA(Asn) + L-glutamate + ADP + phosphate + 2 H(+). In terms of biological role, allows the formation of correctly charged Asn-tRNA(Asn) or Gln-tRNA(Gln) through the transamidation of misacylated Asp-tRNA(Asn) or Glu-tRNA(Gln) in organisms which lack either or both of asparaginyl-tRNA or glutaminyl-tRNA synthetases. The reaction takes place in the presence of glutamine and ATP through an activated phospho-Asp-tRNA(Asn) or phospho-Glu-tRNA(Gln). The sequence is that of Aspartyl/glutamyl-tRNA(Asn/Gln) amidotransferase subunit C from Alkalilimnicola ehrlichii (strain ATCC BAA-1101 / DSM 17681 / MLHE-1).